The sequence spans 531 residues: Chaperonin GroEL 2 (531 aa).

ATP contacts are provided by residues 30–33 (TLGP), 87–91 (DGTTT), G414, and D494.

Belongs to the chaperonin (HSP60) family. As to quaternary structure, forms a cylinder of 14 subunits composed of two heptameric rings stacked back-to-back. Interacts with the co-chaperonin GroES.

The protein resides in the cytoplasm. The catalysed reaction is ATP + H2O + a folded polypeptide = ADP + phosphate + an unfolded polypeptide.. Together with its co-chaperonin GroES, plays an essential role in assisting protein folding. The GroEL-GroES system forms a nano-cage that allows encapsulation of the non-native substrate proteins and provides a physical environment optimized to promote and accelerate protein folding. The chain is Chaperonin GroEL 2 from Cutibacterium acnes (strain DSM 16379 / KPA171202) (Propionibacterium acnes).